The chain runs to 232 residues: Uracil-DNA glycosylase (232 aa).

Catalysis depends on aspartate 66, which acts as the Proton acceptor.

It belongs to the uracil-DNA glycosylase (UDG) superfamily. UNG family.

It is found in the cytoplasm. It catalyses the reaction Hydrolyzes single-stranded DNA or mismatched double-stranded DNA and polynucleotides, releasing free uracil.. Excises uracil residues from the DNA which can arise as a result of misincorporation of dUMP residues by DNA polymerase or due to deamination of cytosine. The protein is Uracil-DNA glycosylase of Lactobacillus helveticus (strain DPC 4571).